Consider the following 54-residue polypeptide: uncharacterized protein (54 aa).

The first 23 residues, 1–23, serve as a signal peptide directing secretion; the sequence is MKELIFFLLIIVILFVVFMVVSS.

This is an uncharacterized protein from Acheta domesticus (House cricket).